The sequence spans 458 residues: ATP synthase subunit beta (458 aa).

Position 148 to 155 (148 to 155) interacts with ATP; it reads GGAGVGKT.

This sequence belongs to the ATPase alpha/beta chains family. In terms of assembly, F-type ATPases have 2 components, CF(1) - the catalytic core - and CF(0) - the membrane proton channel. CF(1) has five subunits: alpha(3), beta(3), gamma(1), delta(1), epsilon(1). CF(0) has three main subunits: a(1), b(2) and c(9-12). The alpha and beta chains form an alternating ring which encloses part of the gamma chain. CF(1) is attached to CF(0) by a central stalk formed by the gamma and epsilon chains, while a peripheral stalk is formed by the delta and b chains.

The protein localises to the cell inner membrane. It catalyses the reaction ATP + H2O + 4 H(+)(in) = ADP + phosphate + 5 H(+)(out). Its function is as follows. Produces ATP from ADP in the presence of a proton gradient across the membrane. The catalytic sites are hosted primarily by the beta subunits. The polypeptide is ATP synthase subunit beta (Pseudomonas aeruginosa (strain LESB58)).